A 128-amino-acid chain; its full sequence is Glycine cleavage system H protein (128 aa).

In terms of domain architecture, Lipoyl-binding spans 22-104; the sequence is TVLVGITDYA…YGEGWIFRLK (83 aa). Residue K63 is modified to N6-lipoyllysine.

Belongs to the GcvH family. As to quaternary structure, the glycine cleavage system is composed of four proteins: P, T, L and H. Monomer. It depends on (R)-lipoate as a cofactor.

Functionally, the glycine cleavage system catalyzes the degradation of glycine. The H protein shuttles the methylamine group of glycine from the P protein to the T protein. This Thermus thermophilus (strain ATCC 27634 / DSM 579 / HB8) protein is Glycine cleavage system H protein.